We begin with the raw amino-acid sequence, 185 residues long: Ribosome-recycling factor (185 aa).

Belongs to the RRF family.

It is found in the cytoplasm. Its function is as follows. Responsible for the release of ribosomes from messenger RNA at the termination of protein biosynthesis. May increase the efficiency of translation by recycling ribosomes from one round of translation to another. This chain is Ribosome-recycling factor, found in Salinispora tropica (strain ATCC BAA-916 / DSM 44818 / JCM 13857 / NBRC 105044 / CNB-440).